We begin with the raw amino-acid sequence, 189 residues long: Probable nicotinate-nucleotide adenylyltransferase (189 aa).

It belongs to the NadD family.

It catalyses the reaction nicotinate beta-D-ribonucleotide + ATP + H(+) = deamido-NAD(+) + diphosphate. Its pathway is cofactor biosynthesis; NAD(+) biosynthesis; deamido-NAD(+) from nicotinate D-ribonucleotide: step 1/1. Functionally, catalyzes the reversible adenylation of nicotinate mononucleotide (NaMN) to nicotinic acid adenine dinucleotide (NaAD). The sequence is that of Probable nicotinate-nucleotide adenylyltransferase from Bacillus pumilus (strain SAFR-032).